The primary structure comprises 143 residues: Hemoglobin subunit alpha (143 aa).

In terms of domain architecture, Globin spans 2-143; the sequence is VLSPADKTNV…VSTVLVSKYR (142 aa). At serine 4 the chain carries Phosphoserine. At lysine 8 the chain carries N6-succinyllysine. Threonine 9 is modified (phosphothreonine). Lysine 12 is subject to N6-succinyllysine. Lysine 17 is modified (N6-acetyllysine; alternate). Lysine 17 is modified (N6-succinyllysine; alternate). Position 25 is a phosphotyrosine (tyrosine 25). Serine 36 bears the Phosphoserine mark. Lysine 41 carries the post-translational modification N6-succinyllysine. Serine 51 is subject to Phosphoserine. An O2-binding site is contributed by histidine 60. Histidine 89 is a binding site for heme b. A Phosphoserine modification is found at serine 104. Phosphothreonine is present on threonine 110. Residue serine 126 is modified to Phosphoserine. Position 136 is a phosphothreonine (threonine 136). Serine 140 is subject to Phosphoserine.

Belongs to the globin family. As to quaternary structure, heterotetramer of two alpha chains and two beta chains. In terms of tissue distribution, red blood cells.

In terms of biological role, involved in oxygen transport from the lung to the various peripheral tissues. Its function is as follows. Hemopressin acts as an antagonist peptide of the cannabinoid receptor CNR1. Hemopressin-binding efficiently blocks cannabinoid receptor CNR1 and subsequent signaling. The protein is Hemoglobin subunit alpha (HBA) of Pipistrellus abramus (Japanese pipistrelle).